We begin with the raw amino-acid sequence, 461 residues long: Protein YIG1 (461 aa).

A disordered region spans residues 58-80; it reads SNVGEDGGDVGNYSEEDDDGDEE. Acidic residues predominate over residues 71–80; sequence SEEDDDGDEE.

It is found in the cytoplasm. Its subcellular location is the nucleus. Involved in the regulation of anaerobiotic glycerol metabolism. The polypeptide is Protein YIG1 (YIG1) (Saccharomyces cerevisiae (strain ATCC 204508 / S288c) (Baker's yeast)).